Here is an 887-residue protein sequence, read N- to C-terminus: Golgin IMH1 (887 aa).

4 disordered regions span residues 16–50 (LAKGINEDTASEGQHGAGAQGGRREEGGSPYEELP), 142–214 (QESL…MKSQ), 240–301 (GASQ…SAGD), and 783–822 (LKMSKDMSSQSRHSSRSGSLVSPSSDNETGNSPRKISISS). Composition is skewed to basic and acidic residues over residues 37–50 (GRREEGGSPYEELP) and 145–210 (LEQR…HAAE). The stretch at 118–241 (AMLTEEIKRI…YKSTIQELGA (124 aa)) forms a coiled coil. The segment covering 240–254 (GASQATGEAQPSSEA) has biased composition (polar residues). A compositionally biased stretch (basic residues) spans 258–273 (RGKKGKGKRGKGKKRV). A coiled-coil region spans residues 299–788 (AGDEIIEAIE…LSTQLKMSKD (490 aa)). The segment covering 788–807 (DMSSQSRHSSRSGSLVSPSS) has biased composition (low complexity). Residues 808–822 (DNETGNSPRKISISS) are compositionally biased toward polar residues. The GRIP domain occupies 837-885 (EMESNEKLAYIRNVLLGFLEHREQRSQLLPVVSTLLQLSSHDEKRLLTS).

The protein resides in the cytoplasm. It is found in the golgi apparatus membrane. In terms of biological role, involved in vesicular transport between an endosomal compartment and the Golgi apparatus. This is Golgin IMH1 (IMH1) from Eremothecium gossypii (strain ATCC 10895 / CBS 109.51 / FGSC 9923 / NRRL Y-1056) (Yeast).